Consider the following 504-residue polypeptide: Anaerobic nitric oxide reductase transcription regulator NorR (504 aa).

Aspartate 57 is subject to 4-aspartylphosphate. The region spanning methionine 187–valine 416 is the Sigma-54 factor interaction domain. ATP is bound by residues glycine 215 to glutamate 222 and alanine 278 to glutamate 287. The segment at residues tryptophan 479–lysine 498 is a DNA-binding region (H-T-H motif).

Its pathway is nitrogen metabolism; nitric oxide reduction. Required for the expression of anaerobic nitric oxide (NO) reductase, acts as a transcriptional activator for at least the norVW operon. Activation also requires sigma-54. This Escherichia coli O157:H7 protein is Anaerobic nitric oxide reductase transcription regulator NorR.